The following is a 193-amino-acid chain: Nucleoside triphosphate pyrophosphatase (193 aa).

The Proton acceptor role is filled by D69.

It belongs to the Maf family. It depends on a divalent metal cation as a cofactor.

The protein localises to the cytoplasm. It catalyses the reaction a ribonucleoside 5'-triphosphate + H2O = a ribonucleoside 5'-phosphate + diphosphate + H(+). It carries out the reaction a 2'-deoxyribonucleoside 5'-triphosphate + H2O = a 2'-deoxyribonucleoside 5'-phosphate + diphosphate + H(+). Functionally, nucleoside triphosphate pyrophosphatase. May have a dual role in cell division arrest and in preventing the incorporation of modified nucleotides into cellular nucleic acids. The chain is Nucleoside triphosphate pyrophosphatase from Parasynechococcus marenigrum (strain WH8102).